Reading from the N-terminus, the 185-residue chain is HTH-type transcriptional regulator SAR2658 (185 aa).

In terms of domain architecture, HTH tetR-type spans 6–66 (KENRQRIEEI…YVIQRDLDIF (61 aa)). A DNA-binding region (H-T-H motif) is located at residues 29–48 (SMNRIAKELGIGMGTLYRHF).

The sequence is that of HTH-type transcriptional regulator SAR2658 from Staphylococcus aureus (strain MRSA252).